Here is a 2193-residue protein sequence, read N- to C-terminus: ATP-dependent helicase BRM (2193 aa).

Residue Met-1 is modified to N-acetylmethionine. Residues 1-10 (MQSGGSGGGP) are compositionally biased toward gly residues. 5 disordered regions span residues 1–126 (MQSG…QEGQ), 175–231 (MQDL…PGNM), 293–466 (QKAG…GFTK), 511–558 (SPAI…DNVG), and 580–649 (TSTD…ASAR). The span at 23 to 62 (ASTSSAASPSSSSSSVQQQQQQQQQQQQQQQLASRQQQQQ) shows a compositional bias: low complexity. Residues 38–58 (VQQQQQQQQQQQQQQQLASRQ) adopt a coiled-coil conformation. The span at 79 to 88 (GVQGMMGGGN) shows a compositional bias: gly residues. Composition is skewed to low complexity over residues 91-102 (SSPGSMQMPQQS), 110-126 (QQQQ…QEGQ), and 180-192 (PSSQ…SKPS). Residues 204–223 (ESSSQQRNETKSHPQQQVGT) show a composition bias toward polar residues. Residues 301-320 (ASQSPSIPISSQPASSSVVP) show a composition bias toward low complexity. 4 stretches are compositionally biased toward polar residues: residues 325 to 339 (PHAN…QSGS), 347 to 358 (STGSFASTSSPR), 383 to 412 (QPTN…STKK), and 421 to 433 (QMQQ…TPTP). Positions 445–463 (SNSSLQSGQGTQQAQQRSG) are enriched in low complexity. The QLQ domain occupies 463-499 (GFTKQQLHVLKAQILAFRRLKKGEGSLPPELLQAISP). Composition is skewed to basic and acidic residues over residues 517–537 (VQDR…ECGK) and 611–621 (PRSDSTADKGK). Polar residues predominate over residues 626 to 638 (DGSQSKVPPQANS). The Nuclear localization signal 1 motif lies at 705 to 712 (LKKINGLL). A coiled-coil region spans residues 726-795 (VLRLQIEEKK…QKAVREKQLK (70 aa)). A Helicase ATP-binding domain is found at 993-1158 (LSLYNNKLNG…WSLLNLLLPD (166 aa)). 1006-1013 (DEMGLGKT) contributes to the ATP binding site. Positions 1109–1129 (DEAQRMKDRESVLARDLDRYR) form a coiled coil. One can recognise a Helicase C-terminal domain in the interval 1312 to 1489 (ILDRILIKLQ…QYKIDMADEV (178 aa)). 2 disordered regions span residues 1583–1775 (SKKP…DEEQ) and 1789–1894 (LRPR…NAGA). Over residues 1608-1617 (KRGRPKSKKI) the composition is skewed to basic residues. Positions 1618 to 1638 (NYKEIEDDIAGYSEESSEERN) form a coiled coil. Ser-1641 is modified (phosphoserine). Positions 1642 to 1657 (GNEEEGDIRQFDDDEL) are enriched in acidic residues. Positions 1821–1832 (TVVDSHSSRQDQ) are enriched in basic and acidic residues. Over residues 1833 to 1842 (SDSSSRLRSV) the composition is skewed to low complexity. Composition is skewed to polar residues over residues 1848–1870 (ASTS…QLTV) and 1882–1892 (DGTSPISSSNA). In terms of domain architecture, Bromo spans 1895–2005 (RMSHIIQKRC…NLFFDLLKMS (111 aa)). The Nuclear localization signal 2 motif lies at 1901–1908 (QKRCKIVI). A compositionally biased stretch (polar residues) spans 2022-2032 (GSAPTLVSTPT). Positions 2022–2193 (GSAPTLVSTP…DSGKRRPSHL (172 aa)) are disordered. Phosphoserine is present on Ser-2137. Residues 2149-2166 (LAQQQRWPNQPTHPNNSG) are compositionally biased toward polar residues.

Belongs to the SNF2/RAD54 helicase family. In terms of assembly, interacts with SWI3B, SWI3C, H3 and H4, but not with SWI3A, SWI3D or BSH. Interacts with LFY. Interacts with REF6. Binds to FGT1. As to expression, highly expressed in inflorescences and leaves. Low expression in siliques, roots and seedlings. Detected in shoot apical meristem, root meristem, vascular tissue of developing leaves, petals, stamens filaments, anthers and carpels.

It localises to the nucleus. The catalysed reaction is ATP + H2O = ADP + phosphate + H(+). In terms of biological role, ATPase subunit of a multiprotein complex equivalent of the SWI/SNF complex that acts by remodeling the chromatin by catalyzing an ATP-dependent alteration in the structure of nucleosomal DNA. Represses embryonic genes in leaves and controls shoot development and flowering. Activates flower homeotic genes. The association of BRM with its target genes requires REF6. Necessary to acquire heat stress (HS) memory, by globally binding to HS memory genes. This Arabidopsis thaliana (Mouse-ear cress) protein is ATP-dependent helicase BRM.